The sequence spans 21 residues: Brevinin-2-related peptide (21 aa).

At L21 the chain carries Leucine amide.

Expressed by the skin glands.

It localises to the secreted. Its function is as follows. Antimicrobial peptide with activity against Gram-negative and Gram-positive bacteria (MIC=13 uM against E.coli, MIC=25 uM against S.aureus) and fungi (MIC=25 uM against C.albicans). Also shows hemolytic activity (HC(50)=50 uM). In vitro, shows moderate inhibitory activity against HIV. The protein is Brevinin-2-related peptide of Lithobates septentrionalis (Mink frog).